We begin with the raw amino-acid sequence, 206 residues long: MKRPVLIGITGGTGSGKSTVAKEIYNKFDEACIAMIEQDSYYKDQSSMPFEERCKKNYDHPDAFDNELLIDHLKNLIDLNVIEKPIYDFEAHNRKEETIKVKPRDIIIVEGILVLQDPRVRELLDIKIYVDTDADVRIIRRLLRDINERGRTVDSVINQYLTVVRPMHMQFIEPSKRYADIIIPEGGHNRVAVDMMVANIKHLLQE.

ATP is bound at residue 11–18 (GGTGSGKS).

It belongs to the uridine kinase family.

The protein resides in the cytoplasm. The catalysed reaction is uridine + ATP = UMP + ADP + H(+). It carries out the reaction cytidine + ATP = CMP + ADP + H(+). The protein operates within pyrimidine metabolism; CTP biosynthesis via salvage pathway; CTP from cytidine: step 1/3. It participates in pyrimidine metabolism; UMP biosynthesis via salvage pathway; UMP from uridine: step 1/1. This Clostridium botulinum (strain Kyoto / Type A2) protein is Uridine kinase.